The chain runs to 385 residues: Probable thioesterase PNKD (385 aa).

Positions 32 to 58 (KASHNRTRALQSHSSPEGKEEPEPLSP) are disordered. 7 residues coordinate Zn(2+): histidine 172, histidine 174, aspartate 176, histidine 177, histidine 229, aspartate 253, and histidine 291.

This sequence belongs to the metallo-beta-lactamase superfamily. Glyoxalase II family. In terms of assembly, isoform 2 interacts with the sarcomeric proteins, MRLC2, MYOM1 and ENO3. The cofactor is Zn(2+). In terms of processing, undergoes cleavage at the N-terminus. As to expression, isoform 1 is only expressed in the brain. Isoform 2 is ubiquitously detected with highest expression in skeletal muscle and detected in myocardial myofibrils.

The protein resides in the cell membrane. The protein localises to the mitochondrion. It localises to the cytoplasm. It is found in the golgi apparatus. Its subcellular location is the endoplasmic reticulum. It catalyses the reaction a thioester + H2O = a thiol + a carboxylate + H(+). Its function is as follows. Probable thioesterase that may play a role in cellular detoxification processes; it likely acts on a yet-unknown alpha-hydroxythioester substrate. In vitro, it is able to catalyze the hydrolysis of S-D-lactoyl-glutathione to form glutathione and D-lactic acid at very low rate, though this reaction is not physiologically relevant in vivo. The chain is Probable thioesterase PNKD (PNKD) from Homo sapiens (Human).